We begin with the raw amino-acid sequence, 158 residues long: Large ribosomal subunit protein uL15 (158 aa).

Over residues M1 to T13 the composition is skewed to basic and acidic residues. A disordered region spans residues M1–A45. The span at R21–V35 shows a compositional bias: gly residues.

Belongs to the universal ribosomal protein uL15 family. In terms of assembly, part of the 50S ribosomal subunit.

In terms of biological role, binds to the 23S rRNA. This Rhizobium leguminosarum bv. trifolii (strain WSM2304) protein is Large ribosomal subunit protein uL15.